A 579-amino-acid polypeptide reads, in one-letter code: Glucans biosynthesis protein G (579 aa).

The N-terminal stretch at 1–37 (MIVSPHKASRIPGNRLRKALMASAALVGLMSAGQLWA) is a signal peptide. The tract at residues 516-579 (AKPAEEAKHD…TWSYQLPADE (64 aa)) is disordered. Positions 517–539 (KPAEEAKHDKTAAKHGKAEKAAK) are enriched in basic and acidic residues.

This sequence belongs to the OpgD/OpgG family.

It localises to the periplasm. Its pathway is glycan metabolism; osmoregulated periplasmic glucan (OPG) biosynthesis. Functionally, involved in the biosynthesis of osmoregulated periplasmic glucans (OPGs). This is Glucans biosynthesis protein G from Pseudomonas putida (strain W619).